We begin with the raw amino-acid sequence, 287 residues long: Prohibitin-1 (287 aa).

Residues 102-116 (VLQLPAIYQNLGLDY) are interaction with ATG8. The AIM signature appears at 109–112 (YQNL). The stretch at 180 to 224 (EFTKAVEQKQIAQQDAERAKFLVEKAEQERQASVIRAEGEAESAE) forms a coiled coil. Residues 264-287 (SQHSGGGNSESSGSPNSLLLNIGR) are disordered. Positions 272–287 (SESSGSPNSLLLNIGR) are enriched in low complexity.

It belongs to the prohibitin family. In terms of assembly, the mitochondrial prohibitin complex consists of two subunits (PHB1 and PHB2). The subunits assemble into a membrane-associated ring-shaped supercomplex of approximately 1 mDa. The mitochondrial prohibitin complex interacts with the m-AAA protease, a heterohexamer composed of YTA12/RCA1 and YTA10/AFG3. The mitochondrial prohibitin complex interacts with ATG8 and the interaction may support mitophagosome assembly. Post-translationally, the N-terminus is blocked.

The protein resides in the mitochondrion inner membrane. Its function is as follows. Prohibitin probably acts as a holdase/unfoldase for the stabilization of newly synthesized mitochondrial proteins. Involved in mitophagy; may act as an adapter for ATG8 that supports mitophagosome assembly. Negatively regulates the proteolytic processing of ATG32 via the i-AAA protease. Acts as a negative regulator of the m-AAA protease. This Saccharomyces cerevisiae (strain ATCC 204508 / S288c) (Baker's yeast) protein is Prohibitin-1 (PHB1).